The primary structure comprises 215 residues: Cytochrome b6 (215 aa).

The helical transmembrane segment at 32–52 (IFYCLGGITLTCFLVQVATGF) threads the bilayer. C35 is a heme c binding site. 2 residues coordinate heme b: H86 and H100. 3 helical membrane passes run 90–110 (ASMM…TGGF), 116–136 (LTWV…VTGY), and 186–206 (LHTF…FPMI). Positions 187 and 202 each coordinate heme b.

It belongs to the cytochrome b family. PetB subfamily. In terms of assembly, the 4 large subunits of the cytochrome b6-f complex are cytochrome b6, subunit IV (17 kDa polypeptide, PetD), cytochrome f and the Rieske protein, while the 4 small subunits are PetG, PetL, PetM and PetN. The complex functions as a dimer. Heme b serves as cofactor. It depends on heme c as a cofactor.

It localises to the plastid. The protein localises to the chloroplast thylakoid membrane. In terms of biological role, component of the cytochrome b6-f complex, which mediates electron transfer between photosystem II (PSII) and photosystem I (PSI), cyclic electron flow around PSI, and state transitions. This Agrostis stolonifera (Creeping bentgrass) protein is Cytochrome b6.